We begin with the raw amino-acid sequence, 455 residues long: Golgi pH regulator (455 aa).

4 consecutive transmembrane segments (helical) span residues 46-66 (ITFA…LGAL), 79-99 (LYVI…YFVV), 111-131 (LFAC…GDPF), and 150-170 (VGVI…VNCP). 2 N-linked (GlcNAc...) asparagine glycosylation sites follow: asparagine 180 and asparagine 243. 4 consecutive transmembrane segments (helical) span residues 290–310 (GYFF…NIVF), 343–363 (ISFI…LITL), 378–398 (VIVL…VLLM), and 425–445 (WFDV…YLAH).

This sequence belongs to the Golgi pH regulator (TC 1.A.38) family. Homotrimer.

The protein resides in the golgi apparatus membrane. It carries out the reaction iodide(out) = iodide(in). It catalyses the reaction chloride(in) = chloride(out). The enzyme catalyses bromide(in) = bromide(out). The catalysed reaction is fluoride(in) = fluoride(out). Its function is as follows. Voltage-gated channel that enables the transfer of anions such as iodide, chloride, bromide and fluoride which may function in counter-ion conductance and participates in Golgi acidification. This Salmo salar (Atlantic salmon) protein is Golgi pH regulator.